The following is a 924-amino-acid chain: Translation initiation factor IF-2 (924 aa).

The interval 118–325 (PSTAHREELA…QAPVVGGVRL (208 aa)) is disordered. 2 stretches are compositionally biased toward pro residues: residues 150 to 173 (APHP…PGGR) and 192 to 201 (IPRPPAPRPS). The segment covering 202-212 (ASPSSMSPRPG) has biased composition (low complexity). The span at 229–295 (RPGGGRPGAP…GAAGAFGRPG (67 aa)) shows a compositional bias: gly residues. The span at 299 to 308 (RRGRKSKRQK) shows a compositional bias: basic residues. Residues 420–591 (VRPPVVTVMG…AVLLTADAAL (172 aa)) enclose the tr-type G domain. The segment at 429–436 (GHVDHGKT) is G1. 429-436 (GHVDHGKT) contacts GTP. A G2 region spans residues 454 to 458 (GITQH). The segment at 479 to 482 (DTPG) is G3. GTP contacts are provided by residues 479–483 (DTPGH) and 533–536 (NKID). The G4 stretch occupies residues 533 to 536 (NKID). The G5 stretch occupies residues 569–571 (SAK).

This sequence belongs to the TRAFAC class translation factor GTPase superfamily. Classic translation factor GTPase family. IF-2 subfamily.

Its subcellular location is the cytoplasm. One of the essential components for the initiation of protein synthesis. Protects formylmethionyl-tRNA from spontaneous hydrolysis and promotes its binding to the 30S ribosomal subunits. Also involved in the hydrolysis of GTP during the formation of the 70S ribosomal complex. The polypeptide is Translation initiation factor IF-2 (Mycobacterium leprae (strain Br4923)).